The sequence spans 311 residues: Formyltransferase/hydrolase complex subunit D (311 aa).

The protein belongs to the FTR family. In terms of assembly, homotetramer. Octaheteromer. Part of the formyltransferase/hydrolase complex fhc; composed of FhcA, FhcB, FhcC and FhcD.

The protein localises to the cytoplasm. The enzyme catalyses N-formylmethanofuran + 5,6,7,8-tetrahydromethanopterin + H(+) = N(5)-formyl-5,6,7,8-tetrahydromethanopterin + methanofuran. Its pathway is one-carbon metabolism; formaldehyde degradation; formate from formaldehyde (H(4)MPT route): step 4/5. Its function is as follows. Involved in the transformation of 5-formyl tetrahydromethanopterin (5-formyl-H(4)MPT) to methanofuran (MFR) and formate via the intermediate formylmethanofuran (formyl-MFR). Catalyzes the transfer of a formyl group from 5-formyl-H(4)MPT to MFR to produce tetrahydromethanopterin (H(4)MPT) and formyl-MFR, which is then hydrolyzed to formate and MFR. The polypeptide is Formyltransferase/hydrolase complex subunit D (Methylorubrum extorquens (strain ATCC 14718 / DSM 1338 / JCM 2805 / NCIMB 9133 / AM1) (Methylobacterium extorquens)).